The primary structure comprises 289 residues: Oxaloacetate decarboxylase (289 aa).

Residue S50 participates in substrate binding. Residue D88 coordinates Mg(2+). Positions 159 and 235 each coordinate substrate.

The protein belongs to the isocitrate lyase/PEP mutase superfamily. Oxaloacetate decarboxylase family. As to quaternary structure, homotetramer; dimer of dimers. The cofactor is Mg(2+).

The catalysed reaction is oxaloacetate + H(+) = pyruvate + CO2. Catalyzes the decarboxylation of oxaloacetate into pyruvate. Seems to play a role in maintaining cellular concentrations of bicarbonate and pyruvate. This Pseudomonas entomophila (strain L48) protein is Oxaloacetate decarboxylase.